The sequence spans 508 residues: Immunoglobulin G-binding protein A (508 aa).

Residues 1 to 36 (MKKKNIYSIRKLGVGIASVTLGTLLISGGVTPAANA) form the signal peptide. Positions 7-18 (YSIRKLGVGIAS) match the YSIRK-G/S signaling motif motif. One copy of the Immunoglobulin-binding region E repeat lies at 37-92 (AQHDEAQQNAFYQVLNMPNLNADQRNGFIQSLKDDPSQSANVLGEAQKLNDSQAPK). The Immunoglobulin-binding region D repeat unit spans residues 93–153 (ADAQQNKFNK…KKLNESQAPK (61 aa)). The stretch at 154–211 (ADNNFNKEQQNAFYEILNMPNLNEEQRNGFIQSLKDDPSQSANLLAEAKKLNESQAPK) is one Immunoglobulin-binding region A repeat. An Immunoglobulin-binding region B repeat occupies 212-269 (ADNKFNKEQQNAFYEILHLPNLNEEQRNGFIQSLKDDPSQSANLLAEAKKLNDAQAPK). The stretch at 270–327 (ADNKFNKEQQNAFYEILHLPNLTEEQRNGFIQSLKDDPSVSKEILAEAKKLNDAQAPK) is one Immunoglobulin-binding region C repeat. The span at 318 to 412 (KKLNDAQAPK…GNKPGKEDGN (95 aa)) shows a compositional bias: basic and acidic residues. Disordered regions lie at residues 318 to 424 (KKLN…DTVN) and 459 to 479 (KKQP…ETGE). 12 repeat units span residues 333–340 (KPGKEDGN), 341–348 (KPGKEDGN), 349–356 (KPGKEDNK), 357–364 (KPGKEDGN), 365–372 (KPGKEDNK), 373–380 (KPGKEDGN), 381–388 (KPGKEDGN), 389–396 (KPGKEDGN), 397–405 (KPGKEDGNK), 406–413 (PGKEDGNG), 414–421 (VHVVKPGD), and 422–429 (TVNDIAKA). The interval 333 to 408 (KPGKEDGNKP…GKEDGNKPGK (76 aa)) is 12 X 8 AA approximate tandem repeats. A LysM domain is found at 413 to 457 (GVHVVKPGDTVNDIAKANGTTADKIAADNKLADKNMIKPGQELVV). An LPXTG sorting signal motif is present at residues 474-478 (LPETG). At Thr-477 the chain carries Pentaglycyl murein peptidoglycan amidated threonine. A propeptide spans 478–508 (GEENPFIGTTVFGGLSLALGAALLAGRRREL) (removed by sortase).

It belongs to the immunoglobulin-binding protein SpA family. Interacts with host TNFRSF1A; this interaction leads to the stimulation of both surface expression and shedding of TNFRSF1A.

Its subcellular location is the secreted. The protein localises to the cell wall. Its function is as follows. Plays a role in the inhibition of the host innate and adaptive immune responses. Possesses five immunoglobulin-binding domains that capture both the fragment crystallizable region (Fc region) and the Fab region (part of Ig that identifies antigen) of immunoglobulins. In turn, Staphylococcus aureus is protected from phagocytic killing via inhibition of Ig Fc region. In addition, the host elicited B-cell response is prevented due to a decrease of antibody-secreting cell proliferation that enter the bone marrow, thereby decreasing long-term antibody production. Inhibits osteogenesis by preventing osteoblast proliferation and expression of alkaline phosphatase, type I collagen, osteopontin and osteocalcin. Acts directly as a pro-inflammatory factor in the lung through its ability to bind and activate tumor necrosis factor alpha receptor 1/TNFRSF1A. In Staphylococcus aureus, this protein is Immunoglobulin G-binding protein A (spa).